A 103-amino-acid polypeptide reads, in one-letter code: Small ribosomal subunit protein uS10 (103 aa).

This sequence belongs to the universal ribosomal protein uS10 family. Part of the 30S ribosomal subunit.

Involved in the binding of tRNA to the ribosomes. The chain is Small ribosomal subunit protein uS10 from Aromatoleum aromaticum (strain DSM 19018 / LMG 30748 / EbN1) (Azoarcus sp. (strain EbN1)).